The chain runs to 327 residues: Tetraacyldisaccharide 4'-kinase (327 aa).

52–59 (TLGGAGKT) is a binding site for ATP.

It belongs to the LpxK family.

The enzyme catalyses a lipid A disaccharide + ATP = a lipid IVA + ADP + H(+). Its pathway is glycolipid biosynthesis; lipid IV(A) biosynthesis; lipid IV(A) from (3R)-3-hydroxytetradecanoyl-[acyl-carrier-protein] and UDP-N-acetyl-alpha-D-glucosamine: step 6/6. In terms of biological role, transfers the gamma-phosphate of ATP to the 4'-position of a tetraacyldisaccharide 1-phosphate intermediate (termed DS-1-P) to form tetraacyldisaccharide 1,4'-bis-phosphate (lipid IVA). This Methylorubrum populi (strain ATCC BAA-705 / NCIMB 13946 / BJ001) (Methylobacterium populi) protein is Tetraacyldisaccharide 4'-kinase.